The primary structure comprises 490 residues: Adenylosuccinate synthetase, chloroplastic (490 aa).

A chloroplast-targeting transit peptide spans 1 to 45 (MSLSSLTLDSNPRFAVGGPYHRRYPPLHHPRSFVSCSAKRPAVSA). Ser-46 bears the N-acetylserine mark. Residues 77-83 (GDEGKGK) and 105-107 (GHT) contribute to the GTP site. Asp-78 functions as the Proton acceptor in the catalytic mechanism. Positions 78 and 105 each coordinate Mg(2+). IMP-binding positions include 78 to 81 (DEGK), 103 to 106 (NAGH), Thr-195, Arg-209, Gln-289, Thr-304, and Arg-368. His-106 serves as the catalytic Proton donor. A substrate-binding site is contributed by 364-370 (TTTGRPR). GTP-binding positions include Arg-370, 396–398 (KLD), and 479–481 (GIG).

This sequence belongs to the adenylosuccinate synthetase family. Homodimer. Mg(2+) is required as a cofactor.

The protein resides in the plastid. The protein localises to the chloroplast. The enzyme catalyses IMP + L-aspartate + GTP = N(6)-(1,2-dicarboxyethyl)-AMP + GDP + phosphate + 2 H(+). It participates in purine metabolism; AMP biosynthesis via de novo pathway; AMP from IMP: step 1/2. Functionally, plays an important role in the de novo pathway and in the salvage pathway of purine nucleotide biosynthesis. Catalyzes the first committed step in the biosynthesis of AMP from IMP. The protein is Adenylosuccinate synthetase, chloroplastic of Arabidopsis thaliana (Mouse-ear cress).